The sequence spans 453 residues: uncharacterized protein (453 aa).

[4Fe-4S] cluster contacts are provided by C74, C80, C83, and C162. 4 residues coordinate S-adenosyl-L-methionine: Q286, Y315, E336, and D384. Catalysis depends on C411, which acts as the Nucleophile.

The protein belongs to the class I-like SAM-binding methyltransferase superfamily. RNA M5U methyltransferase family.

This is an uncharacterized protein from Staphylococcus aureus (strain MRSA252).